We begin with the raw amino-acid sequence, 318 residues long: Tyrosine recombinase XerC (318 aa).

The 92-residue stretch at 17 to 108 (PEVMAERRRW…GLRSFLRYLE (92 aa)) folds into the Core-binding (CB) domain. The region spanning 129-312 (SLPKALTDRE…DSARLLEIYD (184 aa)) is the Tyr recombinase domain. Residues R172, K196, H264, R267, and H290 contribute to the active site. The O-(3'-phospho-DNA)-tyrosine intermediate role is filled by Y299.

The protein belongs to the 'phage' integrase family. XerC subfamily. As to quaternary structure, forms a cyclic heterotetrameric complex composed of two molecules of XerC and two molecules of XerD.

The protein localises to the cytoplasm. Functionally, site-specific tyrosine recombinase, which acts by catalyzing the cutting and rejoining of the recombining DNA molecules. The XerC-XerD complex is essential to convert dimers of the bacterial chromosome into monomers to permit their segregation at cell division. It also contributes to the segregational stability of plasmids. The sequence is that of Tyrosine recombinase XerC from Rhizobium meliloti (strain 1021) (Ensifer meliloti).